The primary structure comprises 130 residues: Seminal plasma protein pB1 (130 aa).

The N-terminal stretch at 1–25 is a signal peptide; that stretch reads MAPRLGIFLLWAGVSVFLPLDPVNG. 2 Fibronectin type-II domains span residues 39–83 and 84–130; these read TSDD…YCRS and TDYA…WRYC. Cystine bridges form between Cys-44–Cys-68, Cys-58–Cys-81, Cys-89–Cys-115, and Cys-103–Cys-130.

This sequence belongs to the seminal plasma protein family. In terms of tissue distribution, component of seminal plasma.

It is found in the secreted. In terms of biological role, may form a complex with spermadhesin AQN-1 which possesses phosphorylcholine-binding activity. This Sus scrofa (Pig) protein is Seminal plasma protein pB1.